Consider the following 429-residue polypeptide: 3-phosphoshikimate 1-carboxyvinyltransferase (429 aa).

3-phosphoshikimate contacts are provided by lysine 21, serine 22, and arginine 26. Residue lysine 21 participates in phosphoenolpyruvate binding. 2 residues coordinate phosphoenolpyruvate: glycine 94 and arginine 122. Residues serine 167, glutamine 169, aspartate 315, and lysine 342 each coordinate 3-phosphoshikimate. Position 169 (glutamine 169) interacts with phosphoenolpyruvate. The active-site Proton acceptor is the aspartate 315. Phosphoenolpyruvate is bound by residues arginine 346 and arginine 388.

Belongs to the EPSP synthase family. As to quaternary structure, monomer.

It is found in the cytoplasm. It carries out the reaction 3-phosphoshikimate + phosphoenolpyruvate = 5-O-(1-carboxyvinyl)-3-phosphoshikimate + phosphate. The protein operates within metabolic intermediate biosynthesis; chorismate biosynthesis; chorismate from D-erythrose 4-phosphate and phosphoenolpyruvate: step 6/7. Its function is as follows. Catalyzes the transfer of the enolpyruvyl moiety of phosphoenolpyruvate (PEP) to the 5-hydroxyl of shikimate-3-phosphate (S3P) to produce enolpyruvyl shikimate-3-phosphate and inorganic phosphate. The chain is 3-phosphoshikimate 1-carboxyvinyltransferase from Desulforamulus reducens (strain ATCC BAA-1160 / DSM 100696 / MI-1) (Desulfotomaculum reducens).